Here is a 397-residue protein sequence, read N- to C-terminus: Homocysteine-responsive endoplasmic reticulum-resident ubiquitin-like domain member 2 protein (397 aa).

A Ubiquitin-like domain is found at 10 to 89 (VTLVIKAPNQ…HMVHLVCASR (80 aa)). 2 disordered regions span residues 87–166 (ASRS…MQGG) and 210–246 (APSP…PANP). 2 stretches are compositionally biased toward low complexity: residues 88 to 123 (SRSP…STPS) and 210 to 220 (APSPSLSAGPA). The helical transmembrane segment at 293–313 (FVMVIGAMLLVYLHQAGWFPF) threads the bilayer. Residues 344-373 (DEGIEDDEGDSGEEGPDDPMNPGPHQPGFL) form a disordered region. The span at 345–360 (EGIEDDEGDSGEEGPD) shows a compositional bias: acidic residues.

It localises to the membrane. Its function is as follows. Could be involved in the unfolded protein response (UPR) pathway. This chain is Homocysteine-responsive endoplasmic reticulum-resident ubiquitin-like domain member 2 protein (herpud2), found in Danio rerio (Zebrafish).